The chain runs to 173 residues: NADH-ubiquinone oxidoreductase chain 6 (173 aa).

The next 5 membrane-spanning stretches (helical) occupy residues 1 to 21 (MTYF…AVAS), 27 to 47 (YGVV…LSLG), 48 to 68 (VSFV…VVFV), 87 to 107 (VVGY…VGGL), and 139 to 159 (CGVG…FVVL).

It belongs to the complex I subunit 6 family.

The protein resides in the mitochondrion membrane. The catalysed reaction is a ubiquinone + NADH + 5 H(+)(in) = a ubiquinol + NAD(+) + 4 H(+)(out). Core subunit of the mitochondrial membrane respiratory chain NADH dehydrogenase (Complex I) that is believed to belong to the minimal assembly required for catalysis. Complex I functions in the transfer of electrons from NADH to the respiratory chain. The immediate electron acceptor for the enzyme is believed to be ubiquinone. The polypeptide is NADH-ubiquinone oxidoreductase chain 6 (MT-ND6) (Synthliboramphus wumizusume (Japanese murrelet)).